The sequence spans 448 residues: 4-hydroxybenzoate transporter PcaK (448 aa).

The Cytoplasmic segment spans residues 1–30 (MNQAQNSVGKSLDVQSFINQQPLSRYQWRV). A helical membrane pass occupies residues 31–51 (VLLCFLIVFLDGLDTAAMGFI). Residues 52–67 (APALSQEWGIDRASLG) are Periplasmic-facing. Residues 68 to 88 (PVMSAALIGMVFGALGSGPLA) form a helical membrane-spanning segment. At 89–94 (DRFGRK) the chain is on the cytoplasmic side. Residues 95–115 (GVLVGAVLVFGGFSLASAYAT) traverse the membrane as a helical segment. Topologically, residues 116-119 (NVDQ) are periplasmic. A helical transmembrane segment spans residues 120–140 (LLVLRFLTGLGLGAGMPNATT). The Cytoplasmic segment spans residues 141 to 152 (LLSEYTPERLKS). Residues 153–173 (LLVTSMFCGFNLGMAGGGFIS) form a helical membrane-spanning segment. The Periplasmic segment spans residues 174-184 (AKMIPAYGWHS). The chain crosses the membrane as a helical span at residues 185–205 (LLVIGGVLPLLLALVLMVWLP). Over 206 to 261 (ESARFLVVRNRGTDKIRKTLSPIAPQVVAEAGSFSVPEQKAVAARSVFAVIFSGTY) the chain is Cytoplasmic. The helical transmembrane segment at 262 to 282 (GLGTMLLWLTYFMGLVIVYLL) threads the bilayer. At 283 to 301 (TSWLPTLMRDSGASMEQAA) the chain is on the periplasmic side. The helical transmembrane segment at 302–322 (FIGALFQFGGVLSAVGVGWAM) threads the bilayer. Topologically, residues 323–329 (DRYNPHK) are cytoplasmic. A helical membrane pass occupies residues 330-350 (VIGIFYLLAGVFAYAVGQSLG). Position 351 (Asn351) is a topological domain, periplasmic. Residues 352–372 (ITVLATLVLIAGMCVNGAQSA) form a helical membrane-spanning segment. Over 373–398 (MPSLAARFYPTQGRATGVSWMLGIGR) the chain is Cytoplasmic. A helical membrane pass occupies residues 399-419 (FGAILGAWSGATLLGLGWNFE). The Periplasmic segment spans residues 420 to 421 (QV). The chain crosses the membrane as a helical span at residues 422 to 442 (LTALLVPAALATVGVIVKGLV). Residues 443–448 (SHADAT) lie on the Cytoplasmic side of the membrane.

It belongs to the major facilitator superfamily. Aromatic acid:H(+) symporter (AAHS) (TC 2.A.1.15) family.

The protein localises to the cell inner membrane. Transports 4-hydroxybenzoate (4-HBA) and protocatechuate across the membrane. Driven by the proton motive force. Also functions as a chemoreceptor, which is required for chemotaxis to aromatic acids. This is 4-hydroxybenzoate transporter PcaK (pcaK) from Pseudomonas putida (Arthrobacter siderocapsulatus).